Reading from the N-terminus, the 394-residue chain is 8-amino-7-oxononanoate synthase (394 aa).

R21 serves as a coordination point for substrate. Residue 112–113 (GY) coordinates pyridoxal 5'-phosphate. Position 137 (H137) interacts with substrate. Residues S183, H211, and T239 each coordinate pyridoxal 5'-phosphate. K242 is subject to N6-(pyridoxal phosphate)lysine. Substrate is bound at residue T358.

This sequence belongs to the class-II pyridoxal-phosphate-dependent aminotransferase family. BioF subfamily. In terms of assembly, homodimer. It depends on pyridoxal 5'-phosphate as a cofactor.

It carries out the reaction 6-carboxyhexanoyl-[ACP] + L-alanine + H(+) = (8S)-8-amino-7-oxononanoate + holo-[ACP] + CO2. It participates in cofactor biosynthesis; biotin biosynthesis. Functionally, catalyzes the decarboxylative condensation of pimeloyl-[acyl-carrier protein] and L-alanine to produce 8-amino-7-oxononanoate (AON), [acyl-carrier protein], and carbon dioxide. The chain is 8-amino-7-oxononanoate synthase from Burkholderia thailandensis (strain ATCC 700388 / DSM 13276 / CCUG 48851 / CIP 106301 / E264).